Here is a 1877-residue protein sequence, read N- to C-terminus: MILKSFLLGNLLSLCMKIINSVVVVGLYYGFLTTFSVGPSYLFLLRARVMEEGTEKEVSATTGFITGQLMMFISIYYAPLHLALGRPHTITVLVLPYLLFHFFWKNHKHFFDYGSTTRNSMRNLSIQCVFLNNLIFQLFNHFILPSSTLARLVNIYMFRCNNKMLFVTSSFVGWLIGHILFMKWVGLVLFWIRQNNSIRSNVLIRSNKYLVSELRNSMARIFRILLFITCVYYLGRIPSPIVTKKLKETSETEEGGESEEETDVEIETTSETRGTQKEQEGSTEEDPSLCSEEKEDPDKIDETEEIRVNGKEKTKDEFHKHRPVYENSYLDGKKKIENWELGILKEDKDLFWFEKPLLTLLFDYKRWNRPLRYIKNDRFENAVRNEMSQYFFHTCPSDGKQIISFTYPPSLSTFLEMIQKKMSLCTTKPEPEDLYNNWIYINDQKINLNNEFINRIEALDRGSLAMDILEKRTRLCNDENEQEYLLEMYDPLLNGPYRGTIKKCNSRSIKDDSITPTEDSIKRIWINNIYGILSTDYREFEHKIDLFDRESLSTDIGHSLTLIIGHSLPAISKFAGESEPSLNFKRLALLAEQRRIDSENKEKCLQLLSEENTTHPNDQTIRNQSIGIEEIGKRVPRWSYKLTDDFEEQEEEDEEESTEDHEIRSRKAKRVVIYTDNDENTDTDTSTKDTTNSDRAEEVALIRYSQQSDFRRNLIKGSMRAQRRKTVTWEMFQANVHSPLFLNRIDRTSPFFSFDFDIAQIMKPLLRNWMENEPEFKTSDSEEKEAKEEEKQKKEKQEADERIFIAEIWDTIIFAQAIRGSMLVTQSILRKYIVLPSLIIAKNIGRMLLFQFPEWYEDLKGWNKEMHIKCTYNGVQLSETEFPKDWLTDGIQIKILFPFCLKPWRRSKLKLRSHHEDPLTLKKKGKKENFCFLTIWGMETELPFGSPRKQPSFFEPISKELEKIIRKVKRKFFLVLRVFKERTKWFLKLSKEKAKWVVLFIKRILKEFEKVNPISLFGLMKVHEPSEKGKDCIISNKIAHESPIQIRSMDWTNYSLTEQKMKDLANRITTIRNQIEKITKEKKKRFLTPDINISPNEIGCDDKRSESQKHIWQISKRRSAKLIRNWPYLMKSFIERIYIDIFLCTINIPIINAQLLLESTKKIIDKYIYNDETNQEGIDETNLNIIHFISTIKKSLSNTNISNKNLQIYCDLSSLSQAYVFYKLSKIKVINLYRLGSALQYHETYLFLKDRIKDYCGTQGIFDSESRHKKPQNSGMNEWKNWLRGHYQYKLSQTKWSRLVPRKWRNRVNQRRMIPNKDSKKWNSYEKEKDQLIHYDKKNDSAVDSLPSQKEKFKKHSRYDLLSHKYIIYEDGKDSSIYGSLLQVNRNQEIPYNYKTHKPKPFYVPGGIAISDYLGEEYIIDIDTDQNPDRKYFDWGILRFCFRKNNINIEPWTDMDSGTNNYQITDKKDLFSLTIHQEINPSTSNSNQKKNFFDWMGMNEEMLSRPISNLEPWFFPEFVLLSDAYKVNPRTIPIKLLLFNFHENENIQNENISENKNINGNKKKDFRISSNQKEYLDQNHEEKELLGQEDCGSDPRNQQKYIEEDYTGSDIKKRRSRKKKLSKSNEEVELDFFLKRYLFFQLRWDYSLDQRIINNIKIYCLLLRLINPNEIAISSIQKGEMFLDVMAIQKDLAFTELRKKGIFIIEPLRLSIKWDGPFYMYQTVGISLVHKSKHQINRRYREKRYVDQNHFNRSTAQHGKILVNGDENHYDLLFPEKIPSTRRRKEMRILISFNSGNGNVVNRNPVFLNGNNVRNCSQFFDEDKHFDTNKFMKFKFFLWPNYRLEDLACMNRYWFDTNNGSRFSMLRIHMYPRFIIS.

Helical transmembrane passes span 18 to 38 (IINS…FSVG), 64 to 84 (FITG…HLAL), 87 to 107 (PHTI…WKNH), 124 to 144 (LSIQ…HFIL), 172 to 192 (VGWL…LFWI), and 221 to 241 (IFRI…PSPI). 3 disordered regions span residues 246–313 (LKET…GKEK), 644–695 (DDFE…NSDR), and 774–795 (PEFK…QKKE). Acidic residues-rich tracts occupy residues 251-268 (ETEE…EIET), 281-304 (GSTE…DETE), and 645-659 (DFEE…ESTE). Basic and acidic residues predominate over residues 685–695 (TSTKDTTNSDR).

Belongs to the TIC214 family. In terms of assembly, part of the Tic complex.

It localises to the plastid. The protein resides in the chloroplast inner membrane. In terms of biological role, involved in protein precursor import into chloroplasts. May be part of an intermediate translocation complex acting as a protein-conducting channel at the inner envelope. This Chloranthus spicatus (Chulantree) protein is Protein TIC 214.